The following is a 52-amino-acid chain: Creatine kinase B-type (52 aa).

The 52-residue stretch at 1–52 folds into the Phosphagen kinase C-terminal domain; that stretch reads AKVLTLDLYKKLRDKSTPSGFTLDDIIQNEHLGYVLTCPSNLGTXLRAXVHV. The Phosphagen kinase N-terminal domain maps to 1-52; sequence AKVLTLDLYKKLRDKSTPSGFTLDDIIQNEHLGYVLTCPSNLGTXLRAXVHV. 2 residues coordinate ATP: R13 and R47.

Belongs to the ATP:guanido phosphotransferase family. As to quaternary structure, dimer of identical or non-identical chains, which can be either B (brain type) or M (muscle type). With MM being the major form in skeletal muscle and myocardium, MB existing in myocardium, and BB existing in many tissues, especially brain. In terms of tissue distribution, expressed in rectal gland, brain, skeletal muscle (at protein level).

The protein resides in the cytoplasm. Its subcellular location is the cytosol. The protein localises to the mitochondrion. It localises to the basal cell membrane. The catalysed reaction is creatine + ATP = N-phosphocreatine + ADP + H(+). Reversibly catalyzes the transfer of phosphate between ATP and various phosphogens (e.g. creatine phosphate). Creatine kinase isoenzymes play a central role in energy transduction in tissues with large, fluctuating energy demands, such as skeletal muscle, heart, brain and spermatozoa. This Squalus acanthias (Spiny dogfish) protein is Creatine kinase B-type.